The sequence spans 338 residues: MESENILEAKQVSVAFRIAGKFQKAIYDIDLSLRRGEVLAIVGESGSGKSTFATAVMGLHNPNQTQITGSILLDEEEVIGKTGDSMASIRGSKVGMIFQNPLTALNPLMKIGQQIKEMLAVHDVYPENQYESRIFQLLEQVGIPNPKRVVNQFPHQLSGGMRQRVMIAIAIANDPDLIIADEPTTALDVTIQAQILDLILEIQKKKNAGVILITHDLGVVAEVADTVAVMYAGQLVEKASVEELFQNPKHPYTRSLLRSNPSAETVSDDLYVIPGSVPSLSEIEYDKDLFLARVPWMKEEAQKVISEKMTEISSNHFVRGQAWKKFEFPDQKLKGGKK.

The 251-residue stretch at 7–257 (LEAKQVSVAF…PKHPYTRSLL (251 aa)) folds into the ABC transporter domain. 43-50 (GESGSGKS) lines the ATP pocket.

The protein belongs to the ABC transporter superfamily. The complex is composed of two ATP-binding proteins (OppD and OppF), two transmembrane proteins (OppB and OppC) and a solute-binding protein (OppA).

The protein localises to the cell membrane. The enzyme catalyses a [peptide](out) + ATP + H2O = a [peptide](in) + ADP + phosphate + H(+). In terms of biological role, part of the ABC transporter complex OppABCDF involved in the uptake of oligopeptides. Probably responsible for energy coupling to the transport system. Essential for uptake of peptides larger than three amino acids and for growth in milk. This Lactococcus lactis subsp. lactis (strain IL1403) (Streptococcus lactis) protein is Oligopeptide transport ATP-binding protein OppD (oppD).